The chain runs to 180 residues: Crossover junction endodeoxyribonuclease RuvC (180 aa).

Active-site residues include Asp-7, Glu-66, and Asp-138. Positions 7, 66, and 138 each coordinate Mg(2+).

Belongs to the RuvC family. In terms of assembly, homodimer which binds Holliday junction (HJ) DNA. The HJ becomes 2-fold symmetrical on binding to RuvC with unstacked arms; it has a different conformation from HJ DNA in complex with RuvA. In the full resolvosome a probable DNA-RuvA(4)-RuvB(12)-RuvC(2) complex forms which resolves the HJ. The cofactor is Mg(2+).

It localises to the cytoplasm. The enzyme catalyses Endonucleolytic cleavage at a junction such as a reciprocal single-stranded crossover between two homologous DNA duplexes (Holliday junction).. In terms of biological role, the RuvA-RuvB-RuvC complex processes Holliday junction (HJ) DNA during genetic recombination and DNA repair. Endonuclease that resolves HJ intermediates. Cleaves cruciform DNA by making single-stranded nicks across the HJ at symmetrical positions within the homologous arms, yielding a 5'-phosphate and a 3'-hydroxyl group; requires a central core of homology in the junction. The consensus cleavage sequence is 5'-(A/T)TT(C/G)-3'. Cleavage occurs on the 3'-side of the TT dinucleotide at the point of strand exchange. HJ branch migration catalyzed by RuvA-RuvB allows RuvC to scan DNA until it finds its consensus sequence, where it cleaves and resolves the cruciform DNA. This is Crossover junction endodeoxyribonuclease RuvC from Paraburkholderia xenovorans (strain LB400).